The primary structure comprises 151 residues: Transcription antitermination protein NusB (151 aa).

This sequence belongs to the NusB family.

Functionally, involved in transcription antitermination. Required for transcription of ribosomal RNA (rRNA) genes. Binds specifically to the boxA antiterminator sequence of the ribosomal RNA (rrn) operons. The sequence is that of Transcription antitermination protein NusB from Photobacterium profundum (strain SS9).